The sequence spans 73 residues: Translation initiation factor IF-1 (73 aa).

The region spanning 1-72 is the S1-like domain; that stretch reads MAKEEAIEKD…SKGRIVYRYK (72 aa).

The protein belongs to the IF-1 family. Component of the 30S ribosomal translation pre-initiation complex which assembles on the 30S ribosome in the order IF-2 and IF-3, IF-1 and N-formylmethionyl-tRNA(fMet); mRNA recruitment can occur at any time during PIC assembly.

It localises to the cytoplasm. One of the essential components for the initiation of protein synthesis. Stabilizes the binding of IF-2 and IF-3 on the 30S subunit to which N-formylmethionyl-tRNA(fMet) subsequently binds. Helps modulate mRNA selection, yielding the 30S pre-initiation complex (PIC). Upon addition of the 50S ribosomal subunit IF-1, IF-2 and IF-3 are released leaving the mature 70S translation initiation complex. The sequence is that of Translation initiation factor IF-1 from Salinibacter ruber (strain DSM 13855 / M31).